We begin with the raw amino-acid sequence, 130 residues long: Ion transport peptide (130 aa).

Disulfide bonds link Cys-62–Cys-98, Cys-78–Cys-94, and Cys-81–Cys-107. Leu-127 bears the Leucine amide mark.

It belongs to the arthropod CHH/MIH/GIH/VIH hormone family. As to expression, brain and corpus cardiacum.

Its subcellular location is the secreted. Stimulates salt and water reabsorption and inhibits acid secretion in the ileum of S.gregaria. The sequence is that of Ion transport peptide from Schistocerca gregaria (Desert locust).